Consider the following 1545-residue polypeptide: ATP-binding cassette sub-family C member 2 (1545 aa).

The Extracellular portion of the chain corresponds to 1–27 (MLEKFCNSTFWNSSFLDSPEADLPLCF). N-linked (GlcNAc...) asparagine glycosylation is found at N7 and N12. The helical transmembrane segment at 28-48 (EQTVLVWIPLGYLWLLAPWQL) threads the bilayer. The Cytoplasmic segment spans residues 49 to 68 (LHVYKSRTKRSSTTKLYLAK). A helical transmembrane segment spans residues 69–89 (QVFVGFLLILAAIELALVLTE). Residues 90 to 93 (DSGQ) are Extracellular-facing. The helical transmembrane segment at 94–114 (ATVPAVRYTNPSLYLGTWLLV) threads the bilayer. Over 115–126 (LLIQYSRQWCVQ) the chain is Cytoplasmic. Residues 127–147 (KNSWFLSLFWILSILCGTFQF) form a helical membrane-spanning segment. Residues 148-165 (QTLIRTLLQGDNSNLAYS) lie on the Extracellular side of the membrane. Residues 166-186 (CLFFISYGFQILILIFSAFSE) form a helical membrane-spanning segment. The Cytoplasmic segment spans residues 187–313 (NNESSNNPSS…DVPKSWLMKA (127 aa)). Positions 253–284 (ARRALQRRQEKSSQQNSGARLPGLNKNQSQSQ) are disordered. Residues S281 and S283 each carry the phosphoserine modification. A helical transmembrane segment spans residues 314–334 (LFKTFYMVLLKSFLLKLVNDI). One can recognise an ABC transmembrane type-1 1 domain in the interval 322 to 605 (LLKSFLLKLV…LPMMISSMLQ (284 aa)). Residues 335–360 (FTFVSPQLLKLLISFASDRDTYLWIG) are Extracellular-facing. Residues 361-381 (YLCAILLFTAALIQSFCLQCY) traverse the membrane as a helical segment. At 382–437 (FQLCFKLGVKVRTAIMASVYKKALTLSNLARKEYTVGETVNLMSVDAQKLMDVTNF) the chain is on the cytoplasmic side. A helical transmembrane segment spans residues 438–458 (MHMLWSSVLQIVLSIFFLWRE). Topologically, residues 459-461 (LGP) are extracellular. A helical transmembrane segment spans residues 462 to 482 (SVLAGVGVMVLVIPINAILST). Residues 483–544 (KSKTIQVKNM…NLLAFSQLQC (62 aa)) lie on the Cytoplasmic side of the membrane. Residues 545–565 (VVIFVFQLTPVLVSVVTFSVY) form a helical membrane-spanning segment. Residues 566 to 587 (VLVDSNNILDAQKAFTSITLFN) lie on the Extracellular side of the membrane. Residues 588–608 (ILRFPLSMLPMMISSMLQASV) form a helical membrane-spanning segment. At 609–971 (STERLEKYLG…VKFSIYLEYL (363 aa)) the chain is on the cytoplasmic side. The region spanning 637–861 (MQFSEASFTW…KGEFAKNLKT (225 aa)) is the ABC transporter 1 domain. 671-678 (GPVGSGKS) is a binding site for ATP. Phosphoserine occurs at positions 878, 926, 930, and 938. The chain crosses the membrane as a helical span at residues 972–992 (QAIGLFSIFFIILAFVMNSVA). In terms of domain architecture, ABC transmembrane type-1 2 spans 979 to 1264 (IFFIILAFVM…LVRMTSEIET (286 aa)). The Extracellular portion of the chain corresponds to 993–1033 (FIGSNLWLSAWTSDSKIFNSTDYPASQRDMRVGVYGALGLA). N-linked (GlcNAc...) asparagine glycosylation is present at N1011. Residues 1034–1054 (QGIFVFIAHFWSAFGFVHASN) traverse the membrane as a helical segment. Residues 1055-1097 (ILHKQLLNNILRAPMRFFDTTPTGRIVNRFAGDISTVDDTLPQ) lie on the Cytoplasmic side of the membrane. Residues 1098–1118 (SLRSWITCFLGIISTLVMICM) form a helical membrane-spanning segment. A1119 is a topological domain (extracellular). Residues 1120–1140 (TPVFTIIVIPLGIIYVSVQMF) traverse the membrane as a helical segment. Over 1141–1211 (YVSTSRQLRR…TSNRWLAIRL (71 aa)) the chain is Cytoplasmic. Residues 1212–1232 (ELVGNLTVFFSALMMVIYRDT) traverse the membrane as a helical segment. Over 1233–1234 (LS) the chain is Extracellular. A helical transmembrane segment spans residues 1235 to 1255 (GDTVGFVLSNALNITQTLNWL). At 1256 to 1545 (VRMTSEIETN…GIENVNSTKF (290 aa)) the chain is on the cytoplasmic side. The region spanning 1300–1534 (IQFNNYQVRY…PGPFYFMAKE (235 aa)) is the ABC transporter 2 domain. 1334–1341 (GRTGAGKS) is an ATP binding site. Position 1438 is a phosphoserine (S1438).

This sequence belongs to the ABC transporter superfamily. ABCC family. Conjugate transporter (TC 3.A.1.208) subfamily. In terms of tissue distribution, expressed by polarized cells in liver, kidney and intestine. The highest expression is found in liver. Expressed in small intestine.

It is found in the apical cell membrane. It catalyses the reaction ATP + H2O + xenobioticSide 1 = ADP + phosphate + xenobioticSide 2.. The catalysed reaction is an S-substituted glutathione(in) + ATP + H2O = an S-substituted glutathione(out) + ADP + phosphate + H(+). The enzyme catalyses taurolithocholate 3-sulfate(in) + ATP + H2O = taurolithocholate 3-sulfate(out) + ADP + phosphate + H(+). It carries out the reaction leukotriene C4(in) + ATP + H2O = leukotriene C4(out) + ADP + phosphate + H(+). It catalyses the reaction 17beta-estradiol 17-O-(beta-D-glucuronate)(in) + ATP + H2O = 17beta-estradiol 17-O-(beta-D-glucuronate)(out) + ADP + phosphate + H(+). The catalysed reaction is (4Z,15Z)-bilirubin IXalpha C8-beta-D-glucuronoside(in) + ATP + H2O = (4Z,15Z)-bilirubin IXalpha C8-beta-D-glucuronoside(out) + ADP + phosphate + H(+). The enzyme catalyses (4Z,15Z)-bilirubin IXalpha C8,C12-beta-D-bisglucuronoside(in) + ATP + H2O = (4Z,15Z)-bilirubin IXalpha C8,C12-beta-D-bisglucuronoside(out) + ADP + phosphate + H(+). ATP-dependent transporter of the ATP-binding cassette (ABC) family that binds and hydrolyzes ATP to enable active transport of various substrates including many drugs, toxicants and endogenous compound across cell membranes. Transports a wide variety of conjugated organic anions such as sulfate-, glucuronide- and glutathione (GSH)-conjugates of endo- and xenobiotics substrates. Mediates hepatobiliary excretion of mono- and bis-glucuronidated bilirubin molecules and therefore play an important role in bilirubin detoxification. Also mediates hepatobiliary excretion of others glucuronide conjugates such as 17beta-estradiol 17-glucosiduronic acid and leukotriene C4. Transports sulfated bile salt such as taurolithocholate sulfate. Transports various anticancer drugs, such as anthracycline, vinca alkaloid and methotrexate and HIV-drugs such as protease inhibitors. Confers resistance to several anti-cancer drugs including cisplatin, doxorubicin, epirubicin, methotrexate, etoposide and vincristine. This Homo sapiens (Human) protein is ATP-binding cassette sub-family C member 2.